Here is a 263-residue protein sequence, read N- to C-terminus: uncharacterized protein (263 aa).

An ATP-binding site is contributed by 31 to 38 (GPTGSGKT).

This sequence belongs to the CbbQ/NirQ/NorQ/GpvN family.

This is an uncharacterized protein from Staphylococcus aureus (strain NCTC 8325 / PS 47).